We begin with the raw amino-acid sequence, 308 residues long: MFIKVLGSAAGGGFPQWNCNCANCQGLRNGTIQASARTQSSIIVSDNGKEWVLCNASPDISQQIAHTPELNKPGVLRGTSIGGIILTDSQIDHTTGLLSLREGCPHQVWCTPEVHEDLSTGFPVFTMLRHWNGGLVHHPIAPQQPFTVDACPDLQFTAVPIASNAPPYSPYRDRPLPGHNVALFIEYRRNGQTLFYAPGLGEPDEALLPWLQKADCLLIDGTVWQDDELQAAGVGRNTGRDMGHLALSDEHGMMALLASLPAKRKILIHINNTNPILNELSPQRQALKQQGIEVSWDGMAITLQDTAC.

It belongs to the PqqB family.

Its pathway is cofactor biosynthesis; pyrroloquinoline quinone biosynthesis. May be involved in the transport of PQQ or its precursor to the periplasm. The sequence is that of Coenzyme PQQ synthesis protein B from Klebsiella pneumoniae (strain 342).